Reading from the N-terminus, the 294-residue chain is Acetyl-coenzyme A carboxylase carboxyl transferase subunit beta (294 aa).

Positions 25–294 (IWTKCDNCGQ…PKVDYRHCVE (270 aa)) constitute a CoA carboxyltransferase N-terminal domain. Zn(2+) is bound by residues cysteine 29, cysteine 32, cysteine 48, and cysteine 51. The C4-type zinc finger occupies 29-51 (CDNCGQLLYKKELERNLEVCPKC).

The protein belongs to the AccD/PCCB family. In terms of assembly, acetyl-CoA carboxylase is a heterohexamer composed of biotin carboxyl carrier protein (AccB), biotin carboxylase (AccC) and two subunits each of ACCase subunit alpha (AccA) and ACCase subunit beta (AccD). Requires Zn(2+) as cofactor.

Its subcellular location is the cytoplasm. It catalyses the reaction N(6)-carboxybiotinyl-L-lysyl-[protein] + acetyl-CoA = N(6)-biotinyl-L-lysyl-[protein] + malonyl-CoA. Its pathway is lipid metabolism; malonyl-CoA biosynthesis; malonyl-CoA from acetyl-CoA: step 1/1. Its function is as follows. Component of the acetyl coenzyme A carboxylase (ACC) complex. Biotin carboxylase (BC) catalyzes the carboxylation of biotin on its carrier protein (BCCP) and then the CO(2) group is transferred by the transcarboxylase to acetyl-CoA to form malonyl-CoA. This Blochmanniella pennsylvanica (strain BPEN) protein is Acetyl-coenzyme A carboxylase carboxyl transferase subunit beta.